We begin with the raw amino-acid sequence, 513 residues long: NADH-quinone oxidoreductase subunit N (513 aa).

14 helical membrane passes run 20 to 40, 49 to 69, 88 to 108, 117 to 137, 144 to 164, 178 to 198, 219 to 239, 260 to 280, 295 to 315, 323 to 343, 351 to 371, 394 to 414, 429 to 451, and 474 to 494; these read SVGFFIPEIYLSLLFMILIVV, STLLSVFSLVGLAGSLYFIYQ, FAIFFKYFFVLSGMLAVVITM, ISSMGEYYALVVAMVVGMMMM, LMIFLSMELVSFTAFILAGYF, LIYGAVSSGLMIYGFSLIYGV, FVMLFAALLVLAGFGYKIGAV, LSVASKAAGFALLMRFVYVAL, WFTLLVILAVASMIYGNVVAL, LLAYSSIAHAGYALLGVIVMD, LFYLLSYLLMNFGAFFVVVLI, GAALTVFLISLVGLPPTIGFI, IFMWLALIGILTSVISLYYYMLI, and LVAQLFMGALMLLTIYFGLFF.

The protein belongs to the complex I subunit 2 family. NDH-1 is composed of 14 different subunits. Subunits NuoA, H, J, K, L, M, N constitute the membrane sector of the complex.

It localises to the cell inner membrane. The catalysed reaction is a quinone + NADH + 5 H(+)(in) = a quinol + NAD(+) + 4 H(+)(out). Its function is as follows. NDH-1 shuttles electrons from NADH, via FMN and iron-sulfur (Fe-S) centers, to quinones in the respiratory chain. The immediate electron acceptor for the enzyme in this species is believed to be a menaquinone. Couples the redox reaction to proton translocation (for every two electrons transferred, four hydrogen ions are translocated across the cytoplasmic membrane), and thus conserves the redox energy in a proton gradient. The chain is NADH-quinone oxidoreductase subunit N from Chlorobium chlorochromatii (strain CaD3).